The sequence spans 877 residues: GPI ethanolamine phosphate transferase 2 (877 aa).

Asn-190 and Asn-368 each carry an N-linked (GlcNAc...) asparagine glycan. Transmembrane regions (helical) follow at residues 409–429 (VDIYIGLSILVAMAIVAFGLF), 443–463 (YNWYFIGISIVYSIHFHASSL), 464–484 (IEEEYQIWWFFSIICLFALYF), 528–548 (VDLLWVLNIATYFLTAILIYS), and 570–590 (DFGSLVTFIVTFVTCSISFSF). Residue Asn-611 is glycosylated (N-linked (GlcNAc...) asparagine). A run of 6 helical transmembrane segments spans residues 634–654 (IHLSKILFYCIGVLIIVRIVL), 683–703 (EIVPIFLIFSLVKFSAAKLLA), 716–736 (LMIIITLFSLCMQNLSFFSMG), 758–778 (VFLVGVLTYCSNFAGPIFWSL), 817–837 (LAGFLFYSMAGLSLVASCFNL), and 854–876 (FASWTLLTNILIDTISSLSILAL).

This sequence belongs to the PIGG/PIGN/PIGO family. PIGG subfamily.

Its subcellular location is the endoplasmic reticulum membrane. It participates in glycolipid biosynthesis; glycosylphosphatidylinositol-anchor biosynthesis. Its function is as follows. Ethanolamine phosphate transferase involved in glycosylphosphatidylinositol-anchor biosynthesis. Transfers ethanolamine phosphate to the GPI second mannose. This Debaryomyces hansenii (strain ATCC 36239 / CBS 767 / BCRC 21394 / JCM 1990 / NBRC 0083 / IGC 2968) (Yeast) protein is GPI ethanolamine phosphate transferase 2 (LAS21).